A 112-amino-acid polypeptide reads, in one-letter code: ATP-dependent Clp protease adapter protein ClpS (112 aa).

Belongs to the ClpS family. As to quaternary structure, binds to the N-terminal domain of the chaperone ClpA.

Functionally, involved in the modulation of the specificity of the ClpAP-mediated ATP-dependent protein degradation. This chain is ATP-dependent Clp protease adapter protein ClpS, found in Rhodococcus jostii (strain RHA1).